We begin with the raw amino-acid sequence, 483 residues long: Proline--tRNA ligase (483 aa).

This sequence belongs to the class-II aminoacyl-tRNA synthetase family. ProS type 3 subfamily. Homodimer.

The protein localises to the cytoplasm. The catalysed reaction is tRNA(Pro) + L-proline + ATP = L-prolyl-tRNA(Pro) + AMP + diphosphate. In terms of biological role, catalyzes the attachment of proline to tRNA(Pro) in a two-step reaction: proline is first activated by ATP to form Pro-AMP and then transferred to the acceptor end of tRNA(Pro). The chain is Proline--tRNA ligase from Sulfolobus acidocaldarius (strain ATCC 33909 / DSM 639 / JCM 8929 / NBRC 15157 / NCIMB 11770).